A 313-amino-acid polypeptide reads, in one-letter code: Fucose-specific lectin (313 aa).

6 tandem repeats follow at residues 5-57 (FLYT…VIGE), 58-109 (AKLF…VGVK), 110-162 (VGSN…SFGS), 163-208 (TVPG…FSAS), 209-260 (ASAG…RPTP), and 261-304 (SLPD…IGAV). The 6 X approximate tandem repeats stretch occupies residues 5–304 (FLYTSKIAAI…SGKGWSIGAV (300 aa)). R25, E37, R78, E90, W98, Q102, R132, E147, and W154 together coordinate beta-L-fucose. Alpha-L-fucose-binding residues include R78 and E90. Residue Q102 participates in alpha-L-fucose binding. Alpha-L-fucose-binding residues include W154, R180, and E192. W200 provides a ligand contact to beta-L-fucose. Residue G204 coordinates alpha-L-fucose. Residues R227 and E239 each contribute to the beta-L-fucose site. Alpha-L-fucose is bound at residue W246. Residue W299 coordinates beta-L-fucose.

This sequence belongs to the fungal fucose-specific lectin family. Forms homodimers. The two AAL monomers are associated via interactions between N-terminal and C-terminal peptides. Tyr-7 interacts via aromatic ring stacking with its counterpart on the other monomer, whereas Ser-284 interacts via hydrogen bonding with Asp-264 on the other monomer.

Its function is as follows. Lectin that specifically binds to L-fucose. Has strongest preference for the alpha-1,6-fucosylated chain (core fucose) on glycoproteins among alpha-1,2-, alpha-1,3-, alpha-1,4-, and alpha-1,6-fucosylated chains. Might play a role in the differentiation of the fruiting body. Exhibits antifungal activity against Mucor racemosus and thus could act as an antifungal protein in natural ecosystems. This Aleuria aurantia (Orange peel mushroom) protein is Fucose-specific lectin.